The following is a 312-amino-acid chain: Serine acetyltransferase 5 (312 aa).

Residues 1–17 are compositionally biased toward basic and acidic residues; it reads MPPAGELRHQSPSKEKL. Positions 1–25 are disordered; it reads MPPAGELRHQSPSKEKLSSVTQSDE.

The protein belongs to the transferase hexapeptide repeat family. As to quaternary structure, homomultimer. Mostly expressed in stems, flowers and siliques. Localized in vascular tissues, particularly in phloem.

It is found in the cytoplasm. It carries out the reaction L-serine + acetyl-CoA = O-acetyl-L-serine + CoA. Its pathway is amino-acid biosynthesis; L-cysteine biosynthesis; L-cysteine from L-serine: step 1/2. Its activity is regulated as follows. Feedback inhibitions by L-Ser and acetyl-CoA. The sequence is that of Serine acetyltransferase 5 (SAT5) from Arabidopsis thaliana (Mouse-ear cress).